A 567-amino-acid polypeptide reads, in one-letter code: Asparagine--tRNA ligase, chloroplastic/mitochondrial (567 aa).

The segment at residues 113-191 (NIMGWVRTLR…VELKVEKIIV (79 aa)) is a DNA-binding region (OB).

Belongs to the class-II aminoacyl-tRNA synthetase family.

The protein resides in the plastid. It is found in the chloroplast. It localises to the mitochondrion. It catalyses the reaction tRNA(Asn) + L-asparagine + ATP = L-asparaginyl-tRNA(Asn) + AMP + diphosphate + H(+). This Arabidopsis thaliana (Mouse-ear cress) protein is Asparagine--tRNA ligase, chloroplastic/mitochondrial.